A 677-amino-acid polypeptide reads, in one-letter code: Methionine--tRNA ligase (677 aa).

Positions 15–25 match the 'HIGH' region motif; it reads PYANGSIHLGH. Zn(2+) contacts are provided by cysteine 146, cysteine 149, cysteine 159, and cysteine 162. The short motif at 333–337 is the 'KMSKS' region element; sequence KMSKS. Lysine 336 lines the ATP pocket. One can recognise a tRNA-binding domain in the interval 575-677; it reads DFAKVDLRVA…AGAKPGHQVK (103 aa).

This sequence belongs to the class-I aminoacyl-tRNA synthetase family. MetG type 1 subfamily. As to quaternary structure, homodimer. Zn(2+) is required as a cofactor.

It localises to the cytoplasm. The catalysed reaction is tRNA(Met) + L-methionine + ATP = L-methionyl-tRNA(Met) + AMP + diphosphate. Its function is as follows. Is required not only for elongation of protein synthesis but also for the initiation of all mRNA translation through initiator tRNA(fMet) aminoacylation. The polypeptide is Methionine--tRNA ligase (Escherichia coli O17:K52:H18 (strain UMN026 / ExPEC)).